We begin with the raw amino-acid sequence, 325 residues long: uncharacterized protein (325 aa).

Tyr59 acts as the Proton donor in catalysis. Substrate is bound at residue His117.

The protein belongs to the aldo/keto reductase family.

Its subcellular location is the cytoplasm. It localises to the nucleus. This is an uncharacterized protein from Schizosaccharomyces pombe (strain 972 / ATCC 24843) (Fission yeast).